The following is a 356-amino-acid chain: UDP-3-O-acylglucosamine N-acyltransferase (356 aa).

Residue histidine 242 is the Proton acceptor of the active site.

Belongs to the transferase hexapeptide repeat family. LpxD subfamily. As to quaternary structure, homotrimer.

It carries out the reaction a UDP-3-O-[(3R)-3-hydroxyacyl]-alpha-D-glucosamine + a (3R)-hydroxyacyl-[ACP] = a UDP-2-N,3-O-bis[(3R)-3-hydroxyacyl]-alpha-D-glucosamine + holo-[ACP] + H(+). The protein operates within bacterial outer membrane biogenesis; LPS lipid A biosynthesis. Catalyzes the N-acylation of UDP-3-O-acylglucosamine using 3-hydroxyacyl-ACP as the acyl donor. Is involved in the biosynthesis of lipid A, a phosphorylated glycolipid that anchors the lipopolysaccharide to the outer membrane of the cell. The sequence is that of UDP-3-O-acylglucosamine N-acyltransferase from Acinetobacter baumannii (strain ACICU).